The chain runs to 500 residues: Cytochrome P450 2D26 (500 aa).

S249 is subject to Phosphoserine. C446 is a binding site for heme.

It belongs to the cytochrome P450 family. Requires heme as cofactor.

The protein localises to the endoplasmic reticulum membrane. It is found in the microsome membrane. The catalysed reaction is an organic molecule + reduced [NADPH--hemoprotein reductase] + O2 = an alcohol + oxidized [NADPH--hemoprotein reductase] + H2O + H(+). Its function is as follows. Cytochromes P450 are a group of heme-thiolate monooxygenases. In liver microsomes, this enzyme is involved in an NADPH-dependent electron transport pathway. It oxidizes a variety of structurally unrelated compounds, including steroids, fatty acids, and xenobiotics. The polypeptide is Cytochrome P450 2D26 (Cyp2d26) (Rattus norvegicus (Rat)).